The chain runs to 230 residues: Sugar fermentation stimulation protein homolog (230 aa).

It belongs to the SfsA family.

The chain is Sugar fermentation stimulation protein homolog from Pyrococcus furiosus (strain ATCC 43587 / DSM 3638 / JCM 8422 / Vc1).